A 284-amino-acid chain; its full sequence is 4-diphosphocytidyl-2-C-methyl-D-erythritol kinase (284 aa).

Lys14 is a catalytic residue. Residue 98 to 108 coordinates ATP; it reads PMGGGLGGGSS. Residue Asp140 is part of the active site.

The protein belongs to the GHMP kinase family. IspE subfamily.

The enzyme catalyses 4-CDP-2-C-methyl-D-erythritol + ATP = 4-CDP-2-C-methyl-D-erythritol 2-phosphate + ADP + H(+). The protein operates within isoprenoid biosynthesis; isopentenyl diphosphate biosynthesis via DXP pathway; isopentenyl diphosphate from 1-deoxy-D-xylulose 5-phosphate: step 3/6. In terms of biological role, catalyzes the phosphorylation of the position 2 hydroxy group of 4-diphosphocytidyl-2C-methyl-D-erythritol. This is 4-diphosphocytidyl-2-C-methyl-D-erythritol kinase from Shewanella pealeana (strain ATCC 700345 / ANG-SQ1).